We begin with the raw amino-acid sequence, 65 residues long: KEGYPVGRDGCKISCVINNNFCKVECQAKWRQSDGYCYFWGLSCYCTNLPEDAQVWDSSTNKCGG.

Positions 1-64 (KEGYPVGRDG…VWDSSTNKCG (64 aa)) constitute an LCN-type CS-alpha/beta domain. 4 disulfide bridges follow: Cys-11–Cys-63, Cys-15–Cys-37, Cys-22–Cys-44, and Cys-26–Cys-46.

The protein belongs to the long (4 C-C) scorpion toxin superfamily. Sodium channel inhibitor family. Beta subfamily. As to expression, expressed by the venom gland.

The protein resides in the secreted. Functionally, beta toxins bind voltage-independently at site-4 of sodium channels (Nav) and shift the voltage of activation toward more negative potentials thereby affecting sodium channel activation and promoting spontaneous and repetitive firing. The chain is Putative beta-neurotoxin RjAa12 from Rhopalurus junceus (Caribbean blue scorpion).